Reading from the N-terminus, the 423-residue chain is Lipase member M (423 aa).

The signal sequence occupies residues 1-33 (MLETLSRQWIVSHRMEMWLLILVAYMFQRNVNS). N-linked (GlcNAc...) asparagine glycosylation occurs at Asn48. The AB hydrolase-1 domain maps to 92–392 (PVVLLQHGLV…EWAHVDFIWG (301 aa)). Residue Ser186 is the Nucleophile of the active site. Cysteines 260 and 269 form a disulfide. Catalysis depends on charge relay system residues Asp357 and His386.

This sequence belongs to the AB hydrolase superfamily. Lipase family. Exclusively expressed in the epidermis within the granular keratinocytes.

It is found in the secreted. Plays a highly specific role in the last step of keratinocyte differentiation. May have an essential function in lipid metabolism of the most differentiated epidermal layers. This chain is Lipase member M (LIPM), found in Homo sapiens (Human).